We begin with the raw amino-acid sequence, 140 residues long: Transcription antitermination protein NusB (140 aa).

It belongs to the NusB family.

Functionally, involved in transcription antitermination. Required for transcription of ribosomal RNA (rRNA) genes. Binds specifically to the boxA antiterminator sequence of the ribosomal RNA (rrn) operons. The polypeptide is Transcription antitermination protein NusB (Pseudothermotoga lettingae (strain ATCC BAA-301 / DSM 14385 / NBRC 107922 / TMO) (Thermotoga lettingae)).